The sequence spans 217 residues: MOB kinase activator 3A (217 aa).

Zn(2+)-binding residues include cysteine 83, cysteine 88, histidine 165, and histidine 170.

This sequence belongs to the MOB1/phocein family.

Functionally, may regulate the activity of kinases. The chain is MOB kinase activator 3A (Mob3a) from Mus musculus (Mouse).